Consider the following 363-residue polypeptide: Guanine nucleotide-binding protein alpha-11 subunit (363 aa).

Residues 26–363 form the G-alpha domain; it reads KMLKILLLGG…KISMEKVGFM (338 aa). Residues 29-42 form a G1 motif region; it reads KILLLGGPECGKST. GTP-binding positions include 34 to 41, 172 to 178, 197 to 201, 276 to 279, and Ala-335; these read GGPECGKS, LRARVPT, DVGGQ, and NKID. Mg(2+)-binding residues include Ser-41 and Thr-178. Positions 170–178 are G2 motif; the sequence is DVLRARVPT. Residues 193–202 are G3 motif; it reads LRMVDVGGQR. A G4 motif region spans residues 272 to 279; it reads ILFLNKID. The interval 333–338 is G5 motif; that stretch reads TNATDT.

The protein belongs to the G-alpha family. As to quaternary structure, g proteins are composed of 3 units; alpha, beta and gamma. The alpha chain contains the guanine nucleotide binding site. Expressed in ADL and ASH neurons.

Its function is as follows. Guanine nucleotide-binding proteins (G proteins) are involved as modulators or transducers in various transmembrane signaling systems. Mediates the transduction of food and serotonin signals, which modulates the avoidance response to the odorant octanol. Has a role in lifespan to promote longevity. This Caenorhabditis elegans protein is Guanine nucleotide-binding protein alpha-11 subunit (gpa-11).